Reading from the N-terminus, the 101-residue chain is MDGLVTQAKIQLRLFQLRMVQVQVLLLLLHCPKKELPKVSLLVSLALNEKNVMKYKCVFPSLNIIILMSDALMFFLRSSICKYRHTHIYIFMCIILANKHF.

Residues 58–80 form a helical membrane-spanning segment; that stretch reads VFPSLNIIILMSDALMFFLRSSI.

It localises to the membrane. This is an uncharacterized protein from Saccharomyces cerevisiae (strain ATCC 204508 / S288c) (Baker's yeast).